A 226-amino-acid polypeptide reads, in one-letter code: 2-C-methyl-D-erythritol 4-phosphate cytidylyltransferase (226 aa).

It belongs to the IspD/TarI cytidylyltransferase family. IspD subfamily.

It catalyses the reaction 2-C-methyl-D-erythritol 4-phosphate + CTP + H(+) = 4-CDP-2-C-methyl-D-erythritol + diphosphate. Its pathway is isoprenoid biosynthesis; isopentenyl diphosphate biosynthesis via DXP pathway; isopentenyl diphosphate from 1-deoxy-D-xylulose 5-phosphate: step 2/6. Catalyzes the formation of 4-diphosphocytidyl-2-C-methyl-D-erythritol from CTP and 2-C-methyl-D-erythritol 4-phosphate (MEP). This chain is 2-C-methyl-D-erythritol 4-phosphate cytidylyltransferase, found in Microcystis aeruginosa (strain NIES-843 / IAM M-2473).